We begin with the raw amino-acid sequence, 482 residues long: Probable cytochrome P450 508D1 (482 aa).

A helical membrane pass occupies residues methionine 1–lysine 21. Cysteine 428 provides a ligand contact to heme.

The protein belongs to the cytochrome P450 family. Requires heme as cofactor.

The protein localises to the membrane. This Dictyostelium discoideum (Social amoeba) protein is Probable cytochrome P450 508D1 (cyp508D1).